The sequence spans 1114 residues: Constitutive coactivator of PPAR-gamma-like protein 1 (1114 aa).

Residues 339–402 form an interaction with YES1, SRC and FYN region; that stretch reads PPHYLARPNP…YNLAEPALTL (64 aa). 2 disordered regions span residues 372-396 and 411-519; these read QAKPVAPQVPSPGAPGQGPHPYNLA and EQNY…GNQI. Positions 431-443 are enriched in polar residues; the sequence is SPINPAPSGSPNH. Residues 477 to 498 are compositionally biased toward basic and acidic residues; it reads GWEKTGSHSEPQARGDPGDQTK. The span at 499 to 510 shows a compositional bias: polar residues; sequence AEGSSTASSGSQ. Position 651 is a phosphothreonine (T651). The interval 825–1114 is RNA binding; the sequence is AEQAAKVEKM…LEAAVLKKEE (290 aa). R869, R880, and R882 each carry omega-N-methylarginine. Residues 918-940 are disordered; it reads FSGSDSSRTSKSQGGIQPIPSQG. K928 bears the N6-acetyllysine mark. Low complexity predominate over residues 929–940; the sequence is SQGGIQPIPSQG. S956 bears the Phosphoserine mark. R978 and R982 each carry omega-N-methylarginine. The tract at residues 1009-1099 is disordered; it reads AIQGKPPYAA…LNALSTDSGC (91 aa). At S1019 the chain carries Phosphoserine. The segment covering 1022–1033 has biased composition (basic and acidic residues); the sequence is EVAKELKSRSGE. Residues 1034-1043 are compositionally biased toward polar residues; the sequence is SKSSAMSSDG. 3 positions are modified to phosphoserine: S1040, S1041, and S1044. Over residues 1060–1097 the composition is skewed to polar residues; sequence MNGSAGDTRAPSHSESALNNDSKTCNTNPHLNALSTDS.

This sequence belongs to the constitutive coactivator of PPAR-gamma family. In terms of assembly, interacts with PURA. Interacts with YES1, SRC, FYN. Upon tyrosine phosphorylation, interacts with PIK3R1. Post-translationally, arg-978 is dimethylated, probably to asymmetric dimethylarginine. In terms of processing, phosphorylated on tyrosine by src family kinases upon ultraviolet exposure.

The protein localises to the cytoplasm. It localises to the cell membrane. Its function is as follows. Component of the oxidative stress-induced survival signaling. May regulate the activation of SRC family protein kinases. May act as a scaffolding protein enabling SRC family protein kinases to phosphorylate and activate PI3-kinase. Binds IGF2 RNA and promotes the production of IGF2 protein. In Bos taurus (Bovine), this protein is Constitutive coactivator of PPAR-gamma-like protein 1 (FAM120A).